The following is a 331-amino-acid chain: Endo-1,4-beta-xylanase 2 (331 aa).

The N-terminal stretch at 1–17 (MKASSVLLGLAPLAALA) is a signal peptide. The GH10 domain maps to 31–329 (QQSIDALMKA…KPAYNSVVQA (299 aa)). N-linked (GlcNAc...) asparagine glycosylation occurs at N105. The active-site Proton donor is the E159. E266 functions as the Nucleophile in the catalytic mechanism. C284 and C290 are disulfide-bonded. A glycan (N-linked (GlcNAc...) asparagine) is linked at N301.

Belongs to the glycosyl hydrolase 10 (cellulase F) family.

Its subcellular location is the secreted. It catalyses the reaction Endohydrolysis of (1-&gt;4)-beta-D-xylosidic linkages in xylans.. Its pathway is glycan degradation; xylan degradation. In terms of biological role, endo-1,4-beta-xylanase involved in the hydrolysis of xylan, a major structural heterogeneous polysaccharide found in plant biomass representing the second most abundant polysaccharide in the biosphere, after cellulose. Accounts for approximately 70 percent of the endoxylanase activity in the culture filtrate. The polypeptide is Endo-1,4-beta-xylanase 2 (XYL2) (Pyricularia grisea (Crabgrass-specific blast fungus)).